We begin with the raw amino-acid sequence, 328 residues long: Carbonic anhydrase-related protein 10 (328 aa).

In terms of domain architecture, Alpha-carbonic anhydrase spans 31–301; the sequence is GWWAYKEVVQ…LNNRCIRTNI (271 aa).

The protein belongs to the alpha-carbonic anhydrase family.

Does not have a catalytic activity. The chain is Carbonic anhydrase-related protein 10 (CA10) from Macaca fascicularis (Crab-eating macaque).